The primary structure comprises 439 residues: Putrescine transporter PotE (439 aa).

A run of 12 helical transmembrane segments spans residues 10–30 (GVVQ…IIML), 40–60 (ISII…WAFA), 91–111 (TYGV…VGYG), 114–134 (LLGA…VLWI), 152–172 (ITVW…WFWF), 186–206 (APFF…FLGL), 225–245 (IAVL…TNVI), 276–296 (VIMA…QFTI), 321–341 (APVQ…LMTI), 354–374 (NLAV…LVII), 387–407 (VANF…YSSG), and 410–430 (AMLY…LVSP).

This sequence belongs to the amino acid-polyamine-organocation (APC) superfamily. Basic amino acid/polyamine antiporter (APA) (TC 2.A.3.2) family.

The protein localises to the cell inner membrane. The catalysed reaction is putrescine(in) + H(+)(in) = putrescine(out) + H(+)(out). It catalyses the reaction putrescine(in) + L-ornithine(out) = putrescine(out) + L-ornithine(in). Its function is as follows. Catalyzes both the uptake and excretion of putrescine. The uptake of putrescine is dependent on the membrane potential and the excretion involves putrescine-ornithine antiporter activity. This is Putrescine transporter PotE from Escherichia coli O6:H1 (strain CFT073 / ATCC 700928 / UPEC).